Consider the following 149-residue polypeptide: Cytochrome c-555 (149 aa).

The N-terminal stretch at 1-20 (MKRTMIVVTTLLLGAGAVMA) is a signal peptide. Heme c-binding residues include Met-32, Cys-137, Cys-140, and His-141.

In terms of assembly, monomer. In terms of processing, binds 1 heme c group covalently per subunit.

The protein resides in the periplasm. In terms of biological role, low-spin monoheme cytochrome. In Bradyrhizobium diazoefficiens (strain JCM 10833 / BCRC 13528 / IAM 13628 / NBRC 14792 / USDA 110), this protein is Cytochrome c-555 (cycC).